The sequence spans 279 residues: Stathmin domain-containing protein 1 (279 aa).

Disordered regions lie at residues 1 to 110 (MGCG…ERPK) and 178 to 254 (AAEE…VAQM). G2 carries N-myristoyl glycine lipidation. Residues 22 to 32 (KGWEEGSKADV) are compositionally biased toward basic and acidic residues. Residues 34–45 (VTSSKENCSPQT) show a composition bias toward polar residues. Positions 121-248 (QGIIQSRSKV…GEPLKRKKSE (128 aa)) constitute an SLD domain. Basic and acidic residues-rich tracts occupy residues 178-191 (AAEE…EEIR) and 232-242 (EKSDVQEGEPL).

This chain is Stathmin domain-containing protein 1 (Stmnd1), found in Mus musculus (Mouse).